A 585-amino-acid chain; its full sequence is Arginine--tRNA ligase (585 aa).

Positions 131-141 (ANPTGPMHVGH) match the 'HIGH' region motif.

The protein belongs to the class-I aminoacyl-tRNA synthetase family. Monomer.

The protein resides in the cytoplasm. The catalysed reaction is tRNA(Arg) + L-arginine + ATP = L-arginyl-tRNA(Arg) + AMP + diphosphate. This is Arginine--tRNA ligase from Rhizobium etli (strain CIAT 652).